Consider the following 391-residue polypeptide: MANPVTLPQTFLLLGSGELGKEFTIAAQRLGNRVIAVDRYPDAPAMQVAQVAEVISMLDGNALEAVVKKYQPDWIVPEVEAIRTEKLLELEAGGYRVIPTAQATNLTMNRDRIRELAAQQLGVRTARYNYATSLAELEEVSQAIGFPNVVKPVMSSSGKGQSVVNNAGEVQQAWSAAIAGARGDQTKVIVEEFIPFELEITLLTIRQWQGETLFCDPIGHRQERGDYQESWQPAPLTQRQLAQAQAIAKTVTDALGGAGIFGVEFFITPEEVIFSELSPRPHDTGMVTLISQNLNEFELHLRAILGLPIPQIKQTGPAASAVILALEAGEKLSYAGLAEALTESGTDVRLFGKPNARPHRRLGVALAQAESVDAARRLAQTVAEKVIVQTE.

Residues Glu18–Leu19 and Glu78 contribute to the N(1)-(5-phospho-beta-D-ribosyl)glycinamide site. ATP contacts are provided by residues Arg110, Lys151, Ser156 to Gln161, Glu191 to Ile194, and Glu199. In terms of domain architecture, ATP-grasp spans Glu115–Leu305. Positions 264 and 276 each coordinate Mg(2+). N(1)-(5-phospho-beta-D-ribosyl)glycinamide-binding positions include Asp283, Lys353, and Arg360–Arg361.

This sequence belongs to the PurK/PurT family. In terms of assembly, homodimer.

It catalyses the reaction N(1)-(5-phospho-beta-D-ribosyl)glycinamide + formate + ATP = N(2)-formyl-N(1)-(5-phospho-beta-D-ribosyl)glycinamide + ADP + phosphate + H(+). It functions in the pathway purine metabolism; IMP biosynthesis via de novo pathway; N(2)-formyl-N(1)-(5-phospho-D-ribosyl)glycinamide from N(1)-(5-phospho-D-ribosyl)glycinamide (formate route): step 1/1. Involved in the de novo purine biosynthesis. Catalyzes the transfer of formate to 5-phospho-ribosyl-glycinamide (GAR), producing 5-phospho-ribosyl-N-formylglycinamide (FGAR). Formate is provided by PurU via hydrolysis of 10-formyl-tetrahydrofolate. The chain is Formate-dependent phosphoribosylglycinamide formyltransferase from Synechocystis sp. (strain ATCC 27184 / PCC 6803 / Kazusa).